Here is a 276-residue protein sequence, read N- to C-terminus: Kallikrein-11 (276 aa).

Residues 1–44 form the signal peptide; the sequence is MRRLKSDWKLSTETREPGARPALLQARMILRLIALALVTGHVGG. Residues 45 to 47 constitute a propeptide, activation peptide; sequence ETR. Residues 48–274 enclose the Peptidase S1 domain; sequence IIKGYECRPH…YFNWIHEVMR (227 aa). Intrachain disulfides connect cysteine 54–cysteine 189, cysteine 73–cysteine 89, cysteine 168–cysteine 235, cysteine 200–cysteine 214, and cysteine 225–cysteine 250. The active-site Charge relay system is the histidine 88. Asparagine 125 carries N-linked (GlcNAc...) asparagine glycosylation. Aspartate 136 (charge relay system) is an active-site residue. N-linked (GlcNAc...) asparagine glycans are attached at residues asparagine 191 and asparagine 207. Catalysis depends on serine 229, which acts as the Charge relay system. A glycan (N-linked (GlcNAc...) asparagine) is linked at asparagine 236.

Belongs to the peptidase S1 family. Kallikrein subfamily. In terms of tissue distribution, expressed in brain and prostate (isoform 1) and prostate (isoform 2).

It is found in the secreted. Possible multifunctional protease. Efficiently cleaves 'bz-Phe-Arg-4-methylcoumaryl-7-amide', a kallikrein substrate, and weakly cleaves other substrates for kallikrein and trypsin. This is Kallikrein-11 (Klk11) from Mus musculus (Mouse).